A 406-amino-acid chain; its full sequence is Imidazolonepropionase (406 aa).

Fe(3+) contacts are provided by histidine 65 and histidine 67. Histidine 65 and histidine 67 together coordinate Zn(2+). 4-imidazolone-5-propanoate is bound by residues arginine 74, tyrosine 137, and histidine 170. Tyrosine 137 contacts N-formimidoyl-L-glutamate. Histidine 235 is a binding site for Fe(3+). Residue histidine 235 coordinates Zn(2+). Position 238 (glutamine 238) interacts with 4-imidazolone-5-propanoate. Aspartate 310 contacts Fe(3+). Residue aspartate 310 participates in Zn(2+) binding. Residues asparagine 312 and glycine 314 each contribute to the N-formimidoyl-L-glutamate site. Residue threonine 315 participates in 4-imidazolone-5-propanoate binding.

Belongs to the metallo-dependent hydrolases superfamily. HutI family. It depends on Zn(2+) as a cofactor. The cofactor is Fe(3+).

The protein localises to the cytoplasm. The catalysed reaction is 4-imidazolone-5-propanoate + H2O = N-formimidoyl-L-glutamate. The protein operates within amino-acid degradation; L-histidine degradation into L-glutamate; N-formimidoyl-L-glutamate from L-histidine: step 3/3. Its function is as follows. Catalyzes the hydrolytic cleavage of the carbon-nitrogen bond in imidazolone-5-propanoate to yield N-formimidoyl-L-glutamate. It is the third step in the universal histidine degradation pathway. The chain is Imidazolonepropionase from Vibrio vulnificus (strain CMCP6).